Here is a 215-residue protein sequence, read N- to C-terminus: Adenylate kinase (215 aa).

10-15 provides a ligand contact to ATP; it reads GAGKGT. The tract at residues 30 to 59 is NMP; it reads STGDMFRAAMKNNTELGKKAKSFMDNGDLV. AMP-binding positions include Thr31, Arg36, 57–59, 85–88, and Gln92; these read DLV and GFPR. The LID stretch occupies residues 126–163; that stretch reads GRWICRTCGKTYHEIYNPPKVPGKCDLDGGELYQRDDD. Position 127 (Arg127) interacts with ATP. Zn(2+) is bound by residues Cys130 and Cys133. 136-137 serves as a coordination point for ATP; it reads TY. Cys150 and Asp153 together coordinate Zn(2+). Positions 160 and 171 each coordinate AMP. Gln199 is an ATP binding site.

It belongs to the adenylate kinase family. In terms of assembly, monomer.

The protein localises to the cytoplasm. The enzyme catalyses AMP + ATP = 2 ADP. Its pathway is purine metabolism; AMP biosynthesis via salvage pathway; AMP from ADP: step 1/1. Its function is as follows. Catalyzes the reversible transfer of the terminal phosphate group between ATP and AMP. Plays an important role in cellular energy homeostasis and in adenine nucleotide metabolism. The sequence is that of Adenylate kinase from Listeria monocytogenes serotype 4b (strain CLIP80459).